A 339-amino-acid chain; its full sequence is Anthranilate phosphoribosyltransferase (339 aa).

5-phospho-alpha-D-ribose 1-diphosphate is bound by residues Gly-79, 82–83 (GD), Ser-87, 89–92 (NIST), 107–115 (KHGNRAASS), and Ala-119. An anthranilate-binding site is contributed by Gly-79. Ser-91 is a Mg(2+) binding site. An anthranilate-binding site is contributed by Asn-110. Arg-165 is an anthranilate binding site. Mg(2+)-binding residues include Asp-224 and Glu-225.

Belongs to the anthranilate phosphoribosyltransferase family. In terms of assembly, homodimer. Requires Mg(2+) as cofactor.

The enzyme catalyses N-(5-phospho-beta-D-ribosyl)anthranilate + diphosphate = 5-phospho-alpha-D-ribose 1-diphosphate + anthranilate. It participates in amino-acid biosynthesis; L-tryptophan biosynthesis; L-tryptophan from chorismate: step 2/5. Its function is as follows. Catalyzes the transfer of the phosphoribosyl group of 5-phosphorylribose-1-pyrophosphate (PRPP) to anthranilate to yield N-(5'-phosphoribosyl)-anthranilate (PRA). The chain is Anthranilate phosphoribosyltransferase from Lactiplantibacillus plantarum (strain ATCC BAA-793 / NCIMB 8826 / WCFS1) (Lactobacillus plantarum).